Reading from the N-terminus, the 319-residue chain is MAVQACALSLRLGLWMSLLLPVLPGAGARAAGARWSGEGTTPHLQSIFLGRCAEYTTLLSLEPGNKNCTAIWEAFKVVLDKDPCSVLPSDYDLFINLSRHAIPRDKSLFWENNHLLVMSYAENTRRLMPLCDVLYGKVGDFLSWCRQENASGLDYQSCPTAEDCENNAVDAYWKSASMQYSRDSSGVINVMLNGSEPKGAYPTKGFFADFEIPYLQKDKITRIEIWVMHEVGGPHVESCGEGSVKILEDRLEALGFQHSCINDYPPVKFLMCVDHSTHPDCAMNSASASMWRESPALHAIGDISLIISLLVALASSSQA.

Positions 1-33 (MAVQACALSLRLGLWMSLLLPVLPGAGARAAGA) are cleaved as a signal peptide. Cystine bridges form between Cys52/Cys68, Cys84/Cys164, and Cys145/Cys158. 2 N-linked (GlcNAc...) asparagine glycosylation sites follow: Asn67 and Asn96. Trp110 is an NAD(+) binding site. Trp110 contacts nicotinamide. Asn149 is a glycosylation site (N-linked (GlcNAc...) asparagine). Trp173 is an NAD(+) binding site. Asn193 carries N-linked (GlcNAc...) asparagine glycosylation. Position 211 (Glu211) interacts with NAD(+). 2 disulfide bridges follow: Cys239-Cys260 and Cys272-Cys281. The GPI-anchor amidated serine moiety is linked to residue Ser294. Positions 295–319 (PALHAIGDISLIISLLVALASSSQA) are excised as a propeptide.

The protein belongs to the ADP-ribosyl cyclase family. As to quaternary structure, homodimer. In terms of tissue distribution, pancreatic islets, kidney, spleen, heart, thymus, intestine and salivary gland.

The protein localises to the cell membrane. It carries out the reaction NAD(+) + H2O = ADP-D-ribose + nicotinamide + H(+). The catalysed reaction is NAD(+) = cyclic ADP-beta-D-ribose + nicotinamide + H(+). The enzyme catalyses cyclic ADP-beta-D-ribose + H2O = ADP-D-ribose. Catalyzes both the synthesis of cyclic ADP-beta-D-ribose (cADPR) from NAD(+), and its hydrolysis to ADP-D-ribose (ADPR). Cyclic ADPR is known to serve as an endogenous second messenger that elicits calcium release from intracellular stores, and thus regulates the mobilization of intracellular calcium. May be involved in pre-B-cell growth. This Rattus norvegicus (Rat) protein is ADP-ribosyl cyclase/cyclic ADP-ribose hydrolase 2 (Bst1).